A 349-amino-acid chain; its full sequence is Isopentenyl-diphosphate delta-isomerase (349 aa).

5 to 6 (RK) contributes to the substrate binding site. FMN contacts are provided by residues Ser62, 63 to 65 (AIT), Ser93, and Asn122. Substrate is bound at residue 93 to 95 (SQR). Gln151 serves as a coordination point for substrate. Glu152 contributes to the Mg(2+) binding site. Residues Lys183, Thr213, 259–261 (GIR), and 280–281 (AL) contribute to the FMN site.

This sequence belongs to the IPP isomerase type 2 family. In terms of assembly, homooctamer. Dimer of tetramers. The cofactor is FMN. It depends on NADPH as a cofactor. Mg(2+) is required as a cofactor.

The protein localises to the cytoplasm. The catalysed reaction is isopentenyl diphosphate = dimethylallyl diphosphate. Its function is as follows. Involved in the biosynthesis of isoprenoids. Catalyzes the 1,3-allylic rearrangement of the homoallylic substrate isopentenyl (IPP) to its allylic isomer, dimethylallyl diphosphate (DMAPP). In Methanothermobacter thermautotrophicus (strain ATCC 29096 / DSM 1053 / JCM 10044 / NBRC 100330 / Delta H) (Methanobacterium thermoautotrophicum), this protein is Isopentenyl-diphosphate delta-isomerase.